Consider the following 267-residue polypeptide: tRNA pseudouridine synthase A (267 aa).

The Nucleophile role is filled by Asp53. Substrate is bound at residue Tyr114.

The protein belongs to the tRNA pseudouridine synthase TruA family. Homodimer.

It carries out the reaction uridine(38/39/40) in tRNA = pseudouridine(38/39/40) in tRNA. Functionally, formation of pseudouridine at positions 38, 39 and 40 in the anticodon stem and loop of transfer RNAs. The polypeptide is tRNA pseudouridine synthase A (Chlamydia trachomatis serovar L2b (strain UCH-1/proctitis)).